Here is a 1184-residue protein sequence, read N- to C-terminus: Cartilage intermediate layer protein 1 (1184 aa).

The first 21 residues, 1 to 21, serve as a signal peptide directing secretion; the sequence is MAAIKTWVFSFLVLEVTTVLG. 2 N-linked (GlcNAc...) asparagine glycosylation sites follow: Asn129 and Asn132. One can recognise a TSP type-1 domain in the interval 150–201; that stretch reads HIWSSWSPWSKCSAACGHTGVQTRTRTCLAQTVSLCSEATEEGQLCMSQACT. 4 disulfide bridges follow: Cys161–Cys195, Cys165–Cys200, Cys177–Cys185, and Cys330–Cys376. The Ig-like C2-type domain occupies 309–393; that stretch reads PYIVMNPEMK…AVKSKVTQLT (85 aa). N-linked (GlcNAc...) asparagine glycans are attached at residues Asn346, Asn420, Asn550, Asn631, Asn1000, and Asn1056. Residues 1138-1184 form a disordered region; that stretch reads ARSPATGTVQGRVPAMRQQRASRGGLRRRGSMAPLRFSGVAQQPLSN.

As to quaternary structure, monomer. Interacts with TGFB1. Post-translationally, cleaved into 2 chains possibly by a furin-like protease upon or preceding secretion. Expressed in articular and meniscal cartilage (at protein level). Primarily localizes to the superficial and intermediate zones of articular cartilage (at protein level).

It localises to the secreted. The protein resides in the extracellular space. Its subcellular location is the extracellular matrix. Probably plays a role in cartilage scaffolding. May act by antagonizing TGF-beta1 (TGFB1) and IGF1 functions. Has the ability to suppress IGF1-induced proliferation and sulfated proteoglycan synthesis, and inhibits ligand-induced IGF1R autophosphorylation. May inhibit TGFB1-mediated induction of cartilage matrix genes via its interaction with TGFB1. Overexpression may lead to impair chondrocyte growth and matrix repair and indirectly promote inorganic pyrophosphate (PPi) supersaturation in aging and osteoarthritis cartilage. In Mus musculus (Mouse), this protein is Cartilage intermediate layer protein 1 (Cilp).